A 142-amino-acid polypeptide reads, in one-letter code: Transcriptional regulator MraZ (142 aa).

SpoVT-AbrB domains follow at residues 5 to 51 (ASSL…PRPE) and 77 to 120 (AMDV…DKAS).

Belongs to the MraZ family. As to quaternary structure, forms oligomers.

It is found in the cytoplasm. It localises to the nucleoid. The polypeptide is Transcriptional regulator MraZ (Verminephrobacter eiseniae (strain EF01-2)).